An 880-amino-acid polypeptide reads, in one-letter code: Valine--tRNA ligase (880 aa).

Residues 49–59 (PNVTGKLHLGH) carry the 'HIGH' region motif. The short motif at 525–529 (KMSKS) is the 'KMSKS' region element. An ATP-binding site is contributed by Lys528. Residues 809–880 (LEGLINIEEE…VKARLAELKR (72 aa)) adopt a coiled-coil conformation.

This sequence belongs to the class-I aminoacyl-tRNA synthetase family. ValS type 1 subfamily. Monomer.

Its subcellular location is the cytoplasm. The catalysed reaction is tRNA(Val) + L-valine + ATP = L-valyl-tRNA(Val) + AMP + diphosphate. In terms of biological role, catalyzes the attachment of valine to tRNA(Val). As ValRS can inadvertently accommodate and process structurally similar amino acids such as threonine, to avoid such errors, it has a 'posttransfer' editing activity that hydrolyzes mischarged Thr-tRNA(Val) in a tRNA-dependent manner. This Geobacillus kaustophilus (strain HTA426) protein is Valine--tRNA ligase.